A 324-amino-acid chain; its full sequence is Glyoxylate/hydroxypyruvate reductase B (324 aa).

Residues R237 and E266 contribute to the active site. The active-site Proton donor is the H285.

Belongs to the D-isomer specific 2-hydroxyacid dehydrogenase family. GhrB subfamily. Homodimer.

The protein resides in the cytoplasm. It catalyses the reaction glycolate + NADP(+) = glyoxylate + NADPH + H(+). The enzyme catalyses (R)-glycerate + NAD(+) = 3-hydroxypyruvate + NADH + H(+). The catalysed reaction is (R)-glycerate + NADP(+) = 3-hydroxypyruvate + NADPH + H(+). Its function is as follows. Catalyzes the NADPH-dependent reduction of glyoxylate and hydroxypyruvate into glycolate and glycerate, respectively. The polypeptide is Glyoxylate/hydroxypyruvate reductase B (Shigella flexneri serotype 5b (strain 8401)).